A 152-amino-acid polypeptide reads, in one-letter code: MKCPKCGSLNDKVVDTRQSKDGTVIRRRRECLDCGYRFTTYERFEEEKIVVKKKNGTTEPFNKDKIIRGIRLASKNRPVSEKQMVEIADEIEKYLLEEGKLVVESTEIGDLVQEKLKKIDPVSYLRFKSVYNEFQDIKDFEKALKEIEEKGE.

A zinc finger spans residues 3–34 (CPKCGSLNDKVVDTRQSKDGTVIRRRRECLDC). Residues 49–139 (IVVKKKNGTT…VYNEFQDIKD (91 aa)) form the ATP-cone domain.

This sequence belongs to the NrdR family. The cofactor is Zn(2+).

Functionally, negatively regulates transcription of bacterial ribonucleotide reductase nrd genes and operons by binding to NrdR-boxes. The protein is Transcriptional repressor NrdR of Persephonella marina (strain DSM 14350 / EX-H1).